The following is a 501-amino-acid chain: Cytochrome P450 monooxygenase ccsG (501 aa).

The signal sequence occupies residues 1–28 (MMITLFTLAVVSIGFFLWWLLTVQPAVT). 2 N-linked (GlcNAc...) asparagine glycosylation sites follow: asparagine 115 and asparagine 154. Cysteine 443 serves as a coordination point for heme.

The protein belongs to the cytochrome P450 family. Heme serves as cofactor.

Its pathway is mycotoxin biosynthesis. Its function is as follows. Cytochrome P450 monooxygenase; part of the gene cluster that mediates the biosynthesis of a family of the mycotoxins cytochalasins E and K. The hybrid PKS-NRPS synthetase ccsA and the enoyl reductase ccsC are responsible for fusion of phenylalanine with an octaketide backbone and subsequent release of the stable tetramic acid precursor. The polyketide synthase module (PKS) of the PKS-NRPS ccsA is responsible for the synthesis of the octaketide backbone. The downstream nonribosomal peptide synthetase (NRPS) amidates the carboxyl end of the octaketide with a phenylalanine. A reductase-like domain (R) at the C-terminus catalyzes the reductive release of the polyketide-amino acid intermediate. Because ccsA lacks a designated enoylreductase (ER) domain, the required activity is provided the enoyl reductase ccsC. Upon formation of the 11-membered carbocycle-fused perhydroisoindolone intermediate, a number of oxidative steps are required to afford the final cytochalasin E and K, including two hydroxylations at C17 and C18, one alcohol oxidation at C17, one epoxidation at C6 and C7 and two Baeyer-Villiger oxidations. The oxidative modification at C17, C18 and the C6-C7 epoxidation are likely to be catalyzed by the two cytochrome P450 oxygenases ccsD and ccsG. CcsD may be responsible for the epoxidation of the C6-C7 double bond. CcsG may be responsible for the successive oxidative modifications at C17 and C18. The double Baeyer-Villiger oxidations of ketocytochalasin to precytochalasin and cytochalasin Z(16) are among the final steps leading to cytochalasin E and K and are catalyzed by ccsB. The first oxygen insertion step follows that of the classic BVMO mechanism, generating the ester precytochalasin. Release of precytochalasin into an aqueous environment can generate the shunt product iso-precytochalasin through spontaneous isomerization. Alternatively, precytochalasin can undergo further oxidation by ccsB to yield the in-line carbonate-containing cytochalasin Z(16). Cytochalasin Z(16) is a precursor to cytochalasin E and cytochalasin K, whereas iso-precytochalasin is a precursor to cytochalasin Z(17) and rosellichalasin. The hydrolyase ccsE may catalyze hydrolysis of epoxide bond in cytochalasin E to afford cytochalasin K. The function of ccsF has not been assigned but it may play a role in post-PKS-NRPS biosynthetic step, resistance or transport of cytochalasins and related PKS-NRPS products. The polypeptide is Cytochrome P450 monooxygenase ccsG (Aspergillus clavatus (strain ATCC 1007 / CBS 513.65 / DSM 816 / NCTC 3887 / NRRL 1 / QM 1276 / 107)).